Reading from the N-terminus, the 172-residue chain is Ribosome maturation factor RimM (172 aa).

In terms of domain architecture, PRC barrel spans 97–170 (ENEFYFHEII…KITIEVMEGL (74 aa)).

Belongs to the RimM family. Binds ribosomal protein uS19.

Its subcellular location is the cytoplasm. In terms of biological role, an accessory protein needed during the final step in the assembly of 30S ribosomal subunit, possibly for assembly of the head region. Essential for efficient processing of 16S rRNA. May be needed both before and after RbfA during the maturation of 16S rRNA. It has affinity for free ribosomal 30S subunits but not for 70S ribosomes. The sequence is that of Ribosome maturation factor RimM from Listeria monocytogenes serovar 1/2a (strain ATCC BAA-679 / EGD-e).